The chain runs to 433 residues: Serine--tRNA ligase (433 aa).

L-serine is bound at residue threonine 235 to glutamate 237. Arginine 266–glutamate 268 contributes to the ATP binding site. Position 289 (glutamate 289) interacts with L-serine. Glutamate 353–serine 356 serves as a coordination point for ATP. Serine 388 contacts L-serine.

This sequence belongs to the class-II aminoacyl-tRNA synthetase family. Type-1 seryl-tRNA synthetase subfamily. In terms of assembly, homodimer. The tRNA molecule binds across the dimer.

The protein resides in the cytoplasm. The enzyme catalyses tRNA(Ser) + L-serine + ATP = L-seryl-tRNA(Ser) + AMP + diphosphate + H(+). The catalysed reaction is tRNA(Sec) + L-serine + ATP = L-seryl-tRNA(Sec) + AMP + diphosphate + H(+). It functions in the pathway aminoacyl-tRNA biosynthesis; selenocysteinyl-tRNA(Sec) biosynthesis; L-seryl-tRNA(Sec) from L-serine and tRNA(Sec): step 1/1. Functionally, catalyzes the attachment of serine to tRNA(Ser). Is also able to aminoacylate tRNA(Sec) with serine, to form the misacylated tRNA L-seryl-tRNA(Sec), which will be further converted into selenocysteinyl-tRNA(Sec). The chain is Serine--tRNA ligase from Burkholderia cepacia (Pseudomonas cepacia).